The following is a 182-amino-acid chain: Ribosome-recycling factor (182 aa).

This sequence belongs to the RRF family.

The protein localises to the cytoplasm. In terms of biological role, responsible for the release of ribosomes from messenger RNA at the termination of protein biosynthesis. May increase the efficiency of translation by recycling ribosomes from one round of translation to another. The sequence is that of Ribosome-recycling factor from Prochlorococcus marinus (strain MIT 9215).